Here is a 224-residue protein sequence, read N- to C-terminus: Small ribosomal subunit protein uS3 (224 aa).

Residues 39–107 form the KH type-2 domain; it reads IREFLKKKPS…DVWVEIAEVK (69 aa).

Belongs to the universal ribosomal protein uS3 family. As to quaternary structure, part of the 30S ribosomal subunit. Forms a tight complex with proteins S10 and S14.

Functionally, binds the lower part of the 30S subunit head. Binds mRNA in the 70S ribosome, positioning it for translation. This chain is Small ribosomal subunit protein uS3, found in Chlamydia trachomatis serovar L2 (strain ATCC VR-902B / DSM 19102 / 434/Bu).